Consider the following 172-residue polypeptide: Myosin regulatory light chain 12B (172 aa).

The span at 1-16 (MSSKKAKTKTTKKRPQ) shows a compositional bias: basic residues. Positions 1 to 20 (MSSKKAKTKTTKKRPQRATS) are disordered. At Thr-19 the chain carries Phosphothreonine; by MLCK and ZIPK/DAPK3. A Phosphoserine; by MLCK and ZIPK/DAPK3 modification is found at Ser-20. EF-hand domains are found at residues 29–64 (SQIQEFKEAFNMIDQNRDGFIDKEDLHDMLASLGKN), 98–133 (DPEDVIRNAFACFDEEATGTIQEDYLRELLTTMGDR), and 134–169 (FTDEEVDELYREAPIDKKGNFNYIEFTRILKHGAKD). 4 residues coordinate Ca(2+): Asp-42, Asn-44, Asp-46, and Asp-53.

In terms of assembly, myosin is a hexamer of 2 heavy chains and 4 light chains: interacts with myosin heavy chain MYO19. In terms of processing, phosphorylation increases the actin-activated myosin ATPase activity and thereby regulates the contractile activity. It is required to generate the driving force in the migration of the cells but not necessary for localization of myosin-2 at the leading edge. Phosphorylation is reduced following epigallocatechin-3-O-gallate treatment.

Functionally, myosin regulatory subunit that plays an important role in regulation of both smooth muscle and nonmuscle cell contractile activity via its phosphorylation. Phosphorylation triggers actin polymerization in vascular smooth muscle. Implicated in cytokinesis, receptor capping, and cell locomotion. This Rattus norvegicus (Rat) protein is Myosin regulatory light chain 12B (Myl12b).